The chain runs to 871 residues: Zinc finger protein 473 (871 aa).

The KRAB domain maps to 6–75 (VTLKDVGMDF…AGGSPEATSP (70 aa)). Disordered stretches follow at residues 47–81 (PPRP…TETK) and 140–164 (NGES…TVST). The segment covering 71-81 (EATSPDVTETK) has biased composition (polar residues). The segment covering 145 to 154 (TECKSHELKR) has biased composition (basic and acidic residues). A Glycyl lysine isopeptide (Lys-Gly) (interchain with G-Cter in SUMO2) cross-link involves residue lysine 148. A C2H2-type 1 zinc finger spans residues 209–231 (YQCSECGKSFSGSYRLTQHWITH). A C2H2-type 2; degenerate zinc finger spans residues 265–286 (YVCNEYGTTFSQSTYLWHQKTH). Residues 290-317 (KPCKSQDSDHPPSHDTQPGEHQKTHTDS) show a composition bias toward basic and acidic residues. The segment at 290-318 (KPCKSQDSDHPPSHDTQPGEHQKTHTDSK) is disordered. Residues 312-552 (KTHTDSKSYN…GFFVSGKILD (241 aa)) are interaction with SLBP/pre-mRNA complex. C2H2-type zinc fingers lie at residues 320–342 (YNCN…QKIH), 347–369 (YECS…QKTH), and 375–397 (SECQ…QALH). The C2H2-type 6; degenerate zinc-finger motif lies at 403–425 (YKCNERGKSFRHNSTLKIHQRVH). A Glycyl lysine isopeptide (Lys-Gly) (interchain with G-Cter in SUMO2) cross-link involves residue lysine 419. 4 consecutive C2H2-type zinc fingers follow at residues 431–453 (YKCS…RRIH), 459–481 (HKCQ…QAIH), 487–509 (YSCA…QKMH), and 515–537 (YECQ…ESVH). Residues lysine 549 and lysine 558 each participate in a glycyl lysine isopeptide (Lys-Gly) (interchain with G-Cter in SUMO2) cross-link. 2 consecutive C2H2-type zinc fingers follow at residues 562–584 (FKCN…ERIH) and 591–613 (FECD…QRIH). Residue lysine 635 forms a Glycyl lysine isopeptide (Lys-Gly) (interchain with G-Cter in SUMO2) linkage. C2H2-type zinc fingers lie at residues 646–668 (FKCN…QLIH), 674–696 (FKCS…ERTH), 702–724 (LVCN…QRIH), 730–752 (YVCD…QRIH), 758–780 (YVCQ…RRVH), 786–808 (YRCG…QRIH), 814–836 (YSCN…LRVH), and 842–864 (YQCQ…QRVH).

Belongs to the krueppel C2H2-type zinc-finger protein family. In terms of assembly, interacts with the SLBP/pre-mRNA complex but not with SLBP alone. Interacts with LSM11 in a U7 snRNP-dependent manner.

It is found in the nucleus. Its function is as follows. Involved in histone 3'-end pre-mRNA processing by associating with U7 snRNP and interacting with SLBP/pre-mRNA complex. Increases histone 3'-end pre-mRNA processing but has no effect on U7 snRNP levels, when overexpressed. Required for cell cycle progression from G1 to S phases. The sequence is that of Zinc finger protein 473 (ZNF473) from Homo sapiens (Human).